The sequence spans 426 residues: Chaperone SurA (426 aa).

The N-terminal stretch at Met1–Ala19 is a signal peptide. 2 PpiC domains span residues Asp169–Asp270 and Val280–Asp379.

It is found in the periplasm. The catalysed reaction is [protein]-peptidylproline (omega=180) = [protein]-peptidylproline (omega=0). Chaperone involved in the correct folding and assembly of outer membrane proteins. Recognizes specific patterns of aromatic residues and the orientation of their side chains, which are found more frequently in integral outer membrane proteins. May act in both early periplasmic and late outer membrane-associated steps of protein maturation. In Nitrosococcus oceani (strain ATCC 19707 / BCRC 17464 / JCM 30415 / NCIMB 11848 / C-107), this protein is Chaperone SurA.